The following is a 392-amino-acid chain: Chorismate synthase (392 aa).

The NADP(+) site is built by arginine 40 and arginine 46. FMN-binding positions include 135 to 137 (RAS), 256 to 257 (QA), glycine 300, 315 to 319 (KPIST), and arginine 341.

Belongs to the chorismate synthase family. Homotetramer. FMNH2 is required as a cofactor.

It catalyses the reaction 5-O-(1-carboxyvinyl)-3-phosphoshikimate = chorismate + phosphate. It participates in metabolic intermediate biosynthesis; chorismate biosynthesis; chorismate from D-erythrose 4-phosphate and phosphoenolpyruvate: step 7/7. Its function is as follows. Catalyzes the anti-1,4-elimination of the C-3 phosphate and the C-6 proR hydrogen from 5-enolpyruvylshikimate-3-phosphate (EPSP) to yield chorismate, which is the branch point compound that serves as the starting substrate for the three terminal pathways of aromatic amino acid biosynthesis. This reaction introduces a second double bond into the aromatic ring system. This chain is Chorismate synthase, found in Acidothermus cellulolyticus (strain ATCC 43068 / DSM 8971 / 11B).